Here is a 333-residue protein sequence, read N- to C-terminus: NADH dehydrogenase (ubiquinone) complex I, assembly factor 6 (333 aa).

The N-terminal 44 residues, 1 to 44 (MAASTLGSAWGPLRLGVPGLCRRRPPRGLWARARRLSEPVASGR), are a transit peptide targeting the mitochondrion.

Belongs to the NDUFAF6 family.

The protein localises to the mitochondrion inner membrane. Functionally, involved in the assembly of mitochondrial NADH:ubiquinone oxidoreductase complex (complex I) at early stages. May play a role in the biogenesis of complex I subunit MT-ND1. The sequence is that of NADH dehydrogenase (ubiquinone) complex I, assembly factor 6 (NDUFAF6) from Bos taurus (Bovine).